The sequence spans 2522 residues: Neurogenic locus notch homolog protein 1 (2522 aa).

The first 19 residues, 1 to 19 (MYRIGLLVLIWSLLGLAQG), serve as a signal peptide directing secretion. EGF-like domains follow at residues 20 to 57 (LRCTQTAEMCLNGGRCEMTPGGTGVCLCSSSYFGERCQ), 58 to 99 (YPNP…KVCL), 102 to 140 (VDNACVNNPCRNGGTCELLSSVSDYRCRCPPGWTGDSCQ), and 141 to 177 (QADPCASNPCANGGKCLPFETQYICKCPSGFHGATCK). At 20-1730 (LRCTQTAEMC…ETAKPPPPLY (1711 aa)) the chain is on the extracellular side. Disulfide bonds link C22/C35, C29/C45, C47/C56, C62/C74, C68/C87, C89/C98, C106/C117, C111/C128, C130/C139, C145/C156, C150/C165, C167/C176, C183/C194, C188/C203, C205/C214, C221/C232, C226/C242, C244/C253, C260/C271, C265/C280, C282/C291, C298/C311, C305/C320, C322/C331, C338/C349, C343/C358, C360/C369, C375/C386, C380/C397, C399/C408, C415/C428, C422/C437, and C439/C448. In terms of domain architecture, EGF-like 5; calcium-binding spans 179–215 (DINECSQNPCRNGGQCLNEFGSYRCNCQNRFTGRNCE). One can recognise an EGF-like 6 domain in the interval 217-254 (PYVPCNPSPCLNGGTCRQTDDTSYECTCLPGFSGQNCE). T231 is a glycosylation site (O-linked (Fuc...) threonine; alternate). T231 is a glycosylation site (O-linked (GalNAc...) threonine; alternate). One can recognise an EGF-like 7; calcium-binding domain in the interval 256 to 292 (NIDDCPSNNCRNGGTCVDGVNTYNCQCPPDWTGQYCT). Residues 294 to 332 (DVDECQLMPNACQNGGTCHNTYGGYNCVCVNGWTGEDCS) enclose the EGF-like 8; calcium-binding domain. Positions 334–370 (NIDDCANAACHSGATCHDRVASFFCECPHGRTGLLCH) constitute an EGF-like 9; calcium-binding domain. The region spanning 371 to 409 (LDNACISNPCNEGSNCDTNPVNGKAICTCPPGYTGPACN) is the EGF-like 10 domain. The EGF-like 11; calcium-binding domain occupies 411 to 449 (DVDECSLGANPCEHGGRCTNTLGSFQCNCPQGYAGPRCE). Residues T431 and S434 each contribute to the Ca(2+) site. S434 carries O-linked (Glc...) serine glycosylation. Positions 451, 452, and 454 each coordinate Ca(2+). The EGF-like 12; calcium-binding domain occupies 451-487 (DVNECLSNPCQNDATCLDQIGEFQCICMPGYEGLYCE). Cystine bridges form between C455/C466, C460/C475, and C477/C486. O-linked (Glc...) serine glycosylation occurs at S457. Residue T465 is glycosylated (O-linked (Fuc...) threonine). Ca(2+) contacts are provided by D468 and Q469. Residues N489, I490, and E492 each coordinate Ca(2+). The 37-residue stretch at 489–525 (NIDECASNPCLHNGKCVDKINEFHCECPTGFNGNLCQ) folds into the EGF-like 13; calcium-binding domain. 75 disulfides stabilise this stretch: C493–C504, C498–C513, C515–C524, C531–C542, C536–C551, C553–C562, C569–C579, C574–C588, C590–C599, C606–C617, C611–C626, C628–C637, C644–C654, C649–C663, C665–C674, C681–C692, C686–C701, C703–C712, C719–C729, C724–C738, C740–C749, C756–C767, C761–C776, C778–C787, C794–C805, C799–C814, C816–C825, C832–C843, C837–C854, C856–C865, C872–C883, C877–C892, C894–C903, C910–C921, C915–C930, C932–C941, C948–C959, C953–C968, C970–C979, C986–C997, C991–C1006, C1008–C1017, C1024–C1035, C1029–C1044, C1046–C1055, C1062–C1073, C1067–C1082, C1084–C1093, C1100–C1121, C1115–C1130, C1132–C1141, C1148–C1159, C1153–C1168, C1170–C1179, C1186–C1197, C1191–C1206, C1208–C1217, C1224–C1243, C1237–C1252, C1254–C1263, C1270–C1283, C1275–C1292, C1294–C1303, C1310–C1321, C1315–C1333, C1335–C1344, C1351–C1362, C1356–C1371, C1373–C1382, C1390–C1401, C1395–C1412, C1414–C1423, C1447–C1470, C1452–C1465, and C1461–C1477. A glycan (O-linked (Glc...) serine) is linked at S495. Ca(2+) contacts are provided by D506 and K507. Residues 527–563 (DVDECASTPCKNGAKCLDGPNSYTCQCTEGFTGRHCE) enclose the EGF-like 14; calcium-binding domain. Residues 565-600 (DINECIPDPCHYGTCKDGIATFTCLCRPGYTGRLCD) form the EGF-like 15; calcium-binding domain. One can recognise an EGF-like 16; calcium-binding domain in the interval 602–638 (DINECLSQPCQNGGQCTDRENGYICTCPKGTTGVNCE). One can recognise an EGF-like 17; calcium-binding domain in the interval 640-675 (NLDDCASNPCDYGKCIDKIDGYECTCEPGYTGKMCN). The 37-residue stretch at 677–713 (NIDECASNPCRNGGTCKDKINGFTCVCPDGYHDHMCL) folds into the EGF-like 18; calcium-binding domain. Positions 715–750 (EVNECNSNPCIHGTCHDGINGYKCDCDAGWSGSNCD) constitute an EGF-like 19; calcium-binding domain. The 37-residue stretch at 752–788 (NNNECESNPCMNGGTCKDMTGAYICTCRAGFSGPNCQ) folds into the EGF-like 20; calcium-binding domain. Residues 790–826 (NINECASNPCLNRGTCIDDVAGYKCNCMLPYTGAICE) form the EGF-like 21; calcium-binding domain. Residues 828–866 (VLAPCSGSPCKNGGRCKESEDYETFSCECPPGWQGQTCE) form the EGF-like 22 domain. An EGF-like 23; calcium-binding domain is found at 868-904 (DMNECVNRPCRNGAMCQNTNGSYKCNCKPGYAGRHCE). Residue N887 is glycosylated (N-linked (GlcNAc...) asparagine). Residues 906 to 942 (DIDDCQPNPCHNGGSCSDGINMFFCNCPAGFRGPKCE) form the EGF-like 24; calcium-binding domain. The region spanning 944–980 (DINECASNPCKNGANCTDCVNSYTCTCQPGFSGIHCE) is the EGF-like 25; calcium-binding domain. Residue N958 is glycosylated (N-linked (GlcNAc...) asparagine). The region spanning 982–1018 (NTPDCTESSCFNGGTCIDGINTFSCQCPPGFTGNYCQ) is the EGF-like 26 domain. One can recognise an EGF-like 27; calcium-binding domain in the interval 1020-1056 (DINECDSKPCLNGGTCQDSYGAYKCTCPQGYTGLNCQ). EGF-like domains lie at 1058–1094 (LVRWCDSSPCKNGGKCWQTNNFYRCECKSGWTGVYCD) and 1096–1142 (PSVS…SYCE). One can recognise an EGF-like 30; calcium-binding domain in the interval 1144–1180 (QVDECSPNPCQNGATCTDYLGGYSCECVAGYHGVNCS). A glycan (N-linked (GlcNAc...) asparagine) is linked at N1178. The EGF-like 31; calcium-binding domain maps to 1182–1218 (EINECLSHPCHNGGTCIDLINTYKCSCPRGTQGVHCE). The EGF-like 32; calcium-binding domain maps to 1220-1264 (NVDDCTPFYDSVSLEPKCFNNGKCFDRVGGYNCICPPGFVGERCE). 4 consecutive EGF-like domains span residues 1266-1304 (DVNECLSNPCDPRGTQNCIQLVNDYRCECRQGFTGRRCD), 1306-1345 (VVDGCKGLPCRNGGTCAVASNTERGFICKCPPGFDGATCE), 1347-1383 (DARTCGNLRCQNGGTCISVLKSSKCVCSEGYTGATCQ), and 1386-1424 (VVSPCASRPCYNGGTCQFSPEEPFFQCFCPTNFNGLFCH). The O-linked (Fuc...) threonine; alternate glycan is linked to T1400. T1400 is a glycosylation site (O-linked (GalNAc...) threonine; alternate). 3 LNR repeats span residues 1447 to 1487 (CENE…PWKN), 1488 to 1529 (CTQS…CNPL), and 1530 to 1564 (YDQYCRDHFQDGHCDQGCNNAECEWDGLDCDNMPE). Positions 1458, 1473, and 1476 each coordinate Ca(2+). Residue N1487 is glycosylated (N-linked (GlcNAc...) asparagine). Disulfide bonds link C1488–C1512, C1494–C1507, C1503–C1519, C1534–C1547, and C1543–C1559. D1500 provides a ligand contact to Ca(2+). N1508 is a glycosylation site (N-linked (GlcNAc...) asparagine). Residues D1515, D1518, D1540, D1555, and D1558 each coordinate Ca(2+). N1584 is a glycosylation site (N-linked (GlcNAc...) asparagine). Residues 1731–1751 (AMFSMLVIPLLIIFVIMVVIV) form a helical membrane-spanning segment. At 1752 to 2522 (NKKRRREHGQ…QRTHIPEAFK (771 aa)) the chain is on the cytoplasmic side. 6 ANK repeats span residues 1877-1920 (DGFT…QLHN), 1925-1954 (TGETALHLAARYARADAAKRLLESSADANV), 1958-1988 (MGRTPLHAAVAADAQGVFQILIRNRATDLDA), 1992-2021 (DGTTPLILAARLAVEGMVEELINAHADVNA), 2025-2054 (FGKSALHWAAAVNNVDAAAVLLKSSANKDM), and 2058-2087 (KEETPLFLAAREGSYETAKVLLDHYANRDI). Disordered regions lie at residues 2146-2229 (MKPS…MPLN), 2365-2404 (LMQAQQMQQQQNLQLHQSVQQQQHQNSNATSTHIGSPFCS), and 2449-2522 (LTPP…EAFK). The span at 2184–2200 (SLLDSGSSGVLSPVDSL) shows a compositional bias: low complexity. Residues 2218–2229 (SPFQQSPSMPLN) are compositionally biased toward polar residues. Over residues 2365–2390 (LMQAQQMQQQQNLQLHQSVQQQQHQN) the composition is skewed to low complexity. Composition is skewed to polar residues over residues 2391–2404 (SNATSTHIGSPFCS) and 2449–2469 (LTPPSQHSYSSPMDNTPSHQL). Positions 2479–2494 (PSPESPDQWSSSSPHS) are enriched in low complexity. A compositionally biased stretch (polar residues) spans 2495 to 2514 (NMSDWSEGISSPPTSMQPQR).

Belongs to the NOTCH family. Post-translationally, O-glycosylated on the EGF-like domains. Contains both O-linked fucose and O-linked glucose. O-linked glycosylation by galnt11 is involved in determination of left/right symmetry: glycosylation promotes activation of notch1, possibly by promoting cleavage by adam17, modulating the balance between motile and immotile (sensory) cilia at the left-right organiser (LRO). In terms of processing, synthesized in the endoplasmic reticulum as an inactive form which is proteolytically cleaved by a furin-like convertase in the trans-Golgi network before it reaches the plasma membrane to yield an active, ligand-accessible form. Cleavage results in a C-terminal fragment N(TM) and a N-terminal fragment N(EC). Following ligand binding, it is cleaved by adam17 to yield a membrane-associated intermediate fragment called notch extracellular truncation (NEXT). Following endocytosis, this fragment is then cleaved by presenilin dependent gamma-secretase to release a Notch-derived peptide containing the intracellular domain (NICD) from the membrane.

Its subcellular location is the cell membrane. The protein localises to the nucleus. In terms of biological role, functions as a receptor for membrane-bound ligands Jagged-1 (JAG1), Jagged-2 (JAG2) and Delta-1 (DLL1) to regulate cell-fate determination. Upon ligand activation through the released notch intracellular domain (NICD) it forms a transcriptional activator complex with RBPJ/RBPSUH and activates genes of the enhancer of split locus. Affects the implementation of differentiation, proliferation and apoptotic programs. Involved in angiogenesis; negatively regulates endothelial cell proliferation and migration and angiogenic sprouting. Involved in the maturation of both CD4(+) and CD8(+) cells in the thymus. Important for follicular differentiation and possibly cell fate selection within the follicle. During cerebellar development, functions as a receptor for neuronal DNER and is involved in the differentiation of Bergmann glia. Represses neuronal and myogenic differentiation. May play an essential role in postimplantation development, probably in some aspect of cell specification and/or differentiation. May be involved in mesoderm development, somite formation and neurogenesis. Involved in determination of left/right symmetry by modulating the balance between motile and immotile (sensory) cilia at the left-right organiser (LRO). This Xenopus tropicalis (Western clawed frog) protein is Neurogenic locus notch homolog protein 1 (notch1).